Reading from the N-terminus, the 212-residue chain is Ribosomal RNA large subunit methyltransferase E (212 aa).

S-adenosyl-L-methionine-binding residues include glycine 56, tryptophan 58, aspartate 78, aspartate 94, and aspartate 117. Lysine 157 (proton acceptor) is an active-site residue.

This sequence belongs to the class I-like SAM-binding methyltransferase superfamily. RNA methyltransferase RlmE family.

The protein localises to the cytoplasm. It catalyses the reaction uridine(2552) in 23S rRNA + S-adenosyl-L-methionine = 2'-O-methyluridine(2552) in 23S rRNA + S-adenosyl-L-homocysteine + H(+). Specifically methylates the uridine in position 2552 of 23S rRNA at the 2'-O position of the ribose in the fully assembled 50S ribosomal subunit. In Ehrlichia chaffeensis (strain ATCC CRL-10679 / Arkansas), this protein is Ribosomal RNA large subunit methyltransferase E.